Reading from the N-terminus, the 243-residue chain is Triosephosphate isomerase (243 aa).

Residue 9–11 coordinates substrate; the sequence is NWK. H96 acts as the Electrophile in catalysis. E165 (proton acceptor) is an active-site residue. Residues G171, S204, and 225 to 226 each bind substrate; that span reads GG.

The protein belongs to the triosephosphate isomerase family. As to quaternary structure, homodimer.

It is found in the cytoplasm. It catalyses the reaction D-glyceraldehyde 3-phosphate = dihydroxyacetone phosphate. It participates in carbohydrate biosynthesis; gluconeogenesis. The protein operates within carbohydrate degradation; glycolysis; D-glyceraldehyde 3-phosphate from glycerone phosphate: step 1/1. Its function is as follows. Involved in the gluconeogenesis. Catalyzes stereospecifically the conversion of dihydroxyacetone phosphate (DHAP) to D-glyceraldehyde-3-phosphate (G3P). The sequence is that of Triosephosphate isomerase from Synechococcus sp. (strain CC9902).